A 397-amino-acid polypeptide reads, in one-letter code: Phosphoglycerate kinase (397 aa).

Substrate contacts are provided by residues 25–27, arginine 41, 64–67, arginine 118, and arginine 151; these read DLN and HLGR. ATP is bound by residues lysine 202, glutamate 324, and 350-353; that span reads GGDT.

The protein belongs to the phosphoglycerate kinase family. Monomer.

Its subcellular location is the cytoplasm. The enzyme catalyses (2R)-3-phosphoglycerate + ATP = (2R)-3-phospho-glyceroyl phosphate + ADP. The protein operates within carbohydrate degradation; glycolysis; pyruvate from D-glyceraldehyde 3-phosphate: step 2/5. This chain is Phosphoglycerate kinase, found in Acidovorax ebreus (strain TPSY) (Diaphorobacter sp. (strain TPSY)).